Reading from the N-terminus, the 208-residue chain is Thiamine-phosphate synthase (208 aa).

4-amino-2-methyl-5-(diphosphooxymethyl)pyrimidine contacts are provided by residues 37–39 (QVR) and Asn70. Residues Asp71 and Asp90 each contribute to the Mg(2+) site. Thr109 serves as a coordination point for 4-amino-2-methyl-5-(diphosphooxymethyl)pyrimidine. 135-137 (TTS) lines the 2-[(2R,5Z)-2-carboxy-4-methylthiazol-5(2H)-ylidene]ethyl phosphate pocket. Lys138 provides a ligand contact to 4-amino-2-methyl-5-(diphosphooxymethyl)pyrimidine. Gly166 lines the 2-[(2R,5Z)-2-carboxy-4-methylthiazol-5(2H)-ylidene]ethyl phosphate pocket.

It belongs to the thiamine-phosphate synthase family. It depends on Mg(2+) as a cofactor.

The enzyme catalyses 2-[(2R,5Z)-2-carboxy-4-methylthiazol-5(2H)-ylidene]ethyl phosphate + 4-amino-2-methyl-5-(diphosphooxymethyl)pyrimidine + 2 H(+) = thiamine phosphate + CO2 + diphosphate. It catalyses the reaction 2-(2-carboxy-4-methylthiazol-5-yl)ethyl phosphate + 4-amino-2-methyl-5-(diphosphooxymethyl)pyrimidine + 2 H(+) = thiamine phosphate + CO2 + diphosphate. The catalysed reaction is 4-methyl-5-(2-phosphooxyethyl)-thiazole + 4-amino-2-methyl-5-(diphosphooxymethyl)pyrimidine + H(+) = thiamine phosphate + diphosphate. Its pathway is cofactor biosynthesis; thiamine diphosphate biosynthesis; thiamine phosphate from 4-amino-2-methyl-5-diphosphomethylpyrimidine and 4-methyl-5-(2-phosphoethyl)-thiazole: step 1/1. In terms of biological role, condenses 4-methyl-5-(beta-hydroxyethyl)thiazole monophosphate (THZ-P) and 2-methyl-4-amino-5-hydroxymethyl pyrimidine pyrophosphate (HMP-PP) to form thiamine monophosphate (TMP). The protein is Thiamine-phosphate synthase of Salinispora arenicola (strain CNS-205).